A 141-amino-acid polypeptide reads, in one-letter code: Nucleoside diphosphate kinase (141 aa).

6 residues coordinate ATP: K11, F59, R87, T93, R104, and N114. The Pros-phosphohistidine intermediate role is filled by H117.

This sequence belongs to the NDK family. In terms of assembly, homotetramer. Mg(2+) serves as cofactor.

Its subcellular location is the cytoplasm. The catalysed reaction is a 2'-deoxyribonucleoside 5'-diphosphate + ATP = a 2'-deoxyribonucleoside 5'-triphosphate + ADP. It catalyses the reaction a ribonucleoside 5'-diphosphate + ATP = a ribonucleoside 5'-triphosphate + ADP. Its function is as follows. Major role in the synthesis of nucleoside triphosphates other than ATP. The ATP gamma phosphate is transferred to the NDP beta phosphate via a ping-pong mechanism, using a phosphorylated active-site intermediate. This Legionella pneumophila (strain Paris) protein is Nucleoside diphosphate kinase.